The sequence spans 56 residues: Small ribosomal subunit protein uS14z/uS14y/uS14x (56 aa).

Zn(2+)-binding residues include cysteine 21, cysteine 24, cysteine 39, and cysteine 42.

The protein belongs to the universal ribosomal protein uS14 family. Zn(2+) serves as cofactor.

The protein is Small ribosomal subunit protein uS14z/uS14y/uS14x (RPS29A) of Arabidopsis thaliana (Mouse-ear cress).